The following is a 637-amino-acid chain: Chaperone protein HtpG (637 aa).

The tract at residues M1–R330 is a; substrate-binding. Positions E331–R551 are b. Residues L552–L637 are c.

It belongs to the heat shock protein 90 family. As to quaternary structure, homodimer.

It localises to the cytoplasm. Molecular chaperone. Has ATPase activity. The sequence is that of Chaperone protein HtpG from Nitratidesulfovibrio vulgaris (strain ATCC 29579 / DSM 644 / CCUG 34227 / NCIMB 8303 / VKM B-1760 / Hildenborough) (Desulfovibrio vulgaris).